We begin with the raw amino-acid sequence, 78 residues long: Small ribosomal subunit protein bS18 (78 aa).

The protein belongs to the bacterial ribosomal protein bS18 family. In terms of assembly, part of the 30S ribosomal subunit. Forms a tight heterodimer with protein bS6.

Functionally, binds as a heterodimer with protein bS6 to the central domain of the 16S rRNA, where it helps stabilize the platform of the 30S subunit. The sequence is that of Small ribosomal subunit protein bS18 from Thermobifida fusca (strain YX).